A 338-amino-acid chain; its full sequence is Phenylalanine--tRNA ligase alpha subunit (338 aa).

Glu253 is a binding site for Mg(2+).

This sequence belongs to the class-II aminoacyl-tRNA synthetase family. Phe-tRNA synthetase alpha subunit type 1 subfamily. As to quaternary structure, tetramer of two alpha and two beta subunits. Requires Mg(2+) as cofactor.

It localises to the cytoplasm. It catalyses the reaction tRNA(Phe) + L-phenylalanine + ATP = L-phenylalanyl-tRNA(Phe) + AMP + diphosphate + H(+). This is Phenylalanine--tRNA ligase alpha subunit from Syntrophotalea carbinolica (strain DSM 2380 / NBRC 103641 / GraBd1) (Pelobacter carbinolicus).